The primary structure comprises 600 residues: NADH-quinone oxidoreductase subunit C/D (600 aa).

Residues 1–190 (MIDLMPKKNT…EPFFLNEQKE (190 aa)) form an NADH dehydrogenase I subunit C region. An NADH dehydrogenase I subunit D region spans residues 214–600 (EFMFLNLGPN…IDFVMSDVDR (387 aa)).

This sequence in the N-terminal section; belongs to the complex I 30 kDa subunit family. In the C-terminal section; belongs to the complex I 49 kDa subunit family. NDH-1 is composed of 13 different subunits. Subunits NuoB, CD, E, F, and G constitute the peripheral sector of the complex.

It is found in the cell membrane. It carries out the reaction a quinone + NADH + 5 H(+)(in) = a quinol + NAD(+) + 4 H(+)(out). Functionally, NDH-1 shuttles electrons from NADH, via FMN and iron-sulfur (Fe-S) centers, to quinones in the respiratory chain. The immediate electron acceptor for the enzyme in this species is believed to be ubiquinone. Couples the redox reaction to proton translocation (for every two electrons transferred, four hydrogen ions are translocated across the cytoplasmic membrane), and thus conserves the redox energy in a proton gradient. The chain is NADH-quinone oxidoreductase subunit C/D from Buchnera aphidicola subsp. Acyrthosiphon pisum (strain Tuc7).